Here is a 557-residue protein sequence, read N- to C-terminus: MSYNRRSKNITQGVARSPNRSMYYALGYQKEDFDKPMIGIANGHSTITPCNAGLQRLSDAAVAAVKDAGANPQIFGTPTISDGMSMGTEGMKYSLVSREVIADCIETCVQGQWMDGVVVVGGCDKNMPGGMIALARINVPGIYVYGGTIRPGHWKGHDLTIVSSFEAVGEFTAGRMSQEDFEGVEKNACPTTGSCGGMYTANTMSSSFEALGMSLLYSSTMANPDQEKVDSAAESARVLVEAVKKDLKPRDIITKQSIENAVSVIMATGGSTNAVLHYLAIAHAAEIDWSIEDFERIRKRVPVICDLKPSGQYVATDLHAAGGIPQVMKLLLDAGLLHGDCMTITGRTLAEELKDVPSVPRADQKVIHPIDQALYKEGHLAILKGNLAEDGAVAKITGLKNPVITGPARVFDDEQSALAAILDDRIRAGDVVVLRYLGPQGGPGMPEMLAPTSAIIGKGLGESVGLITDGRFSGGTWGMVVGHVAPEAFVGGTIALVQEGDSITIDAHKLLLQLNVDDAELARRRAAWKQPAPRYTRGVLAKYAALARPANQGAVTG.

Residue Cys-50 coordinates [2Fe-2S] cluster. Asp-82 contributes to the Mg(2+) binding site. [2Fe-2S] cluster is bound at residue Cys-123. Mg(2+)-binding residues include Asp-124 and Lys-125. N6-carboxylysine is present on Lys-125. Cys-195 serves as a coordination point for [2Fe-2S] cluster. A Mg(2+)-binding site is contributed by Glu-447. Ser-473 (proton acceptor) is an active-site residue.

This sequence belongs to the IlvD/Edd family. Homodimer. It depends on [2Fe-2S] cluster as a cofactor. The cofactor is Mg(2+).

It catalyses the reaction (2R)-2,3-dihydroxy-3-methylbutanoate = 3-methyl-2-oxobutanoate + H2O. The catalysed reaction is (2R,3R)-2,3-dihydroxy-3-methylpentanoate = (S)-3-methyl-2-oxopentanoate + H2O. It participates in amino-acid biosynthesis; L-isoleucine biosynthesis; L-isoleucine from 2-oxobutanoate: step 3/4. The protein operates within amino-acid biosynthesis; L-valine biosynthesis; L-valine from pyruvate: step 3/4. Functionally, functions in the biosynthesis of branched-chain amino acids. Catalyzes the dehydration of (2R,3R)-2,3-dihydroxy-3-methylpentanoate (2,3-dihydroxy-3-methylvalerate) into 2-oxo-3-methylpentanoate (2-oxo-3-methylvalerate) and of (2R)-2,3-dihydroxy-3-methylbutanoate (2,3-dihydroxyisovalerate) into 2-oxo-3-methylbutanoate (2-oxoisovalerate), the penultimate precursor to L-isoleucine and L-valine, respectively. This is Dihydroxy-acid dehydratase from Burkholderia mallei (strain NCTC 10247).